A 128-amino-acid chain; its full sequence is Ribonuclease P protein component (128 aa).

The protein belongs to the RnpA family. In terms of assembly, consists of a catalytic RNA component (M1 or rnpB) and a protein subunit.

The enzyme catalyses Endonucleolytic cleavage of RNA, removing 5'-extranucleotides from tRNA precursor.. RNaseP catalyzes the removal of the 5'-leader sequence from pre-tRNA to produce the mature 5'-terminus. It can also cleave other RNA substrates such as 4.5S RNA. The protein component plays an auxiliary but essential role in vivo by binding to the 5'-leader sequence and broadening the substrate specificity of the ribozyme. The polypeptide is Ribonuclease P protein component (Rhizobium meliloti (strain 1021) (Ensifer meliloti)).